The sequence spans 251 residues: Glucosamine-6-phosphate deaminase (251 aa).

The active-site Proton acceptor; for enolization step is the D67. Catalysis depends on N136, which acts as the For ring-opening step. Residue H138 is the Proton acceptor; for ring-opening step of the active site. E143 serves as the catalytic For ring-opening step.

This sequence belongs to the glucosamine/galactosamine-6-phosphate isomerase family. NagB subfamily.

It carries out the reaction alpha-D-glucosamine 6-phosphate + H2O = beta-D-fructose 6-phosphate + NH4(+). It functions in the pathway amino-sugar metabolism; N-acetylneuraminate degradation; D-fructose 6-phosphate from N-acetylneuraminate: step 5/5. Functionally, catalyzes the reversible isomerization-deamination of glucosamine 6-phosphate (GlcN6P) to form fructose 6-phosphate (Fru6P) and ammonium ion. This chain is Glucosamine-6-phosphate deaminase, found in Geobacillus sp. (strain WCH70).